We begin with the raw amino-acid sequence, 989 residues long: DEAD-box ATP-dependent RNA helicase 45 (989 aa).

Basic and acidic residues-rich tracts occupy residues Met-1–Asp-39 and Arg-64–Lys-101. 2 disordered regions span residues Met-1–Glu-248 and Gln-305–Glu-330. A coiled-coil region spans residues Leu-88–Gln-182. Ser-119 is modified (phosphoserine). The span at Ser-134–Glu-179 shows a compositional bias: basic and acidic residues. Ser-200 is modified (phosphoserine). Basic and acidic residues predominate over residues Glu-203–Gly-222. Residues Glu-230–Glu-239 are compositionally biased toward polar residues. Positions Asp-321–Glu-330 are enriched in acidic residues. A Q motif motif is present at residues Gln-396–Ala-424. The Helicase ATP-binding domain maps to Leu-427–Ile-605. Ala-440 to Thr-447 provides a ligand contact to ATP. The DEAD box motif lies at Asp-553–Asp-556. Positions Gln-590 to Ala-748 constitute a Helicase C-terminal domain.

It belongs to the DEAD box helicase family. DDX46/PRP5 subfamily.

It catalyses the reaction ATP + H2O = ADP + phosphate + H(+). The polypeptide is DEAD-box ATP-dependent RNA helicase 45 (RH45) (Arabidopsis thaliana (Mouse-ear cress)).